The sequence spans 294 residues: ATP synthase gamma chain (294 aa).

This sequence belongs to the ATPase gamma chain family. In terms of assembly, F-type ATPases have 2 components, CF(1) - the catalytic core - and CF(0) - the membrane proton channel. CF(1) has five subunits: alpha(3), beta(3), gamma(1), delta(1), epsilon(1). CF(0) has three main subunits: a, b and c.

Its subcellular location is the cell inner membrane. Its function is as follows. Produces ATP from ADP in the presence of a proton gradient across the membrane. The gamma chain is believed to be important in regulating ATPase activity and the flow of protons through the CF(0) complex. This Nitrosomonas eutropha (strain DSM 101675 / C91 / Nm57) protein is ATP synthase gamma chain.